We begin with the raw amino-acid sequence, 570 residues long: MLTTPPRTFVSVPFFFFFLLFLSLPLSSFSQSNSVYNSFLKCFSDKTKSPQSQITDNVFSQTNPAFSSVLRAYIRNARFNTSSTLKPTIIITPRSESHVSAAVTCSKTLNFLLKIRSGGHDYDGLSYISDKPFFILDMSNIRDVSVDIASNSAWISAGATLGEVYYRIWEKSRVHGFPAGVCPTVGVGGHLSGGGYGNMVRKFGLSVDYVEDAKIVDVNGRVLDRKAMGEDLFWAITGGGGGSYGVVLGYKVKLVPVPSVVTVFRVEQYMDSGAVDMVHKWQSVGPKTDPNLFMRMLIQPVTRKKVKTVRASVVALFLGRADEVVALLSKEFPELGLKKENCSEMTWFQSALWWDNRLNATQVDPKVFLDRNLDTSSFGKRKSDYVATAIPKKGIESLFKKMIELGKIGLVFNPYGGKMAEVAVNAKPFPHRNKLFKIQYSVNWKENSAEIEKGYLNQAKVLYSFMTGFVSKNPRSSYFNYRDVDIGVNDHGANSYKEGEVYGRKYFGENFDRLVKIKTAVDPGNFFRNEQSIPTLKNEKGMLLPEPGKARRWSRVGGATVVATVVLHVF.

A signal peptide spans 1 to 30 (MLTTPPRTFVSVPFFFFFLLFLSLPLSSFS). The cysteines at positions 42 and 105 are disulfide-linked. Asn-80 carries an N-linked (GlcNAc...) asparagine glycan. One can recognise an FAD-binding PCMH-type domain in the interval 83–257 (STLKPTIIIT…LGYKVKLVPV (175 aa)). Positions 120–182 (HDYDGLSYIS…RVHGFPAGVC (63 aa)) form a cross-link, 6-(S-cysteinyl)-8alpha-(pros-histidyl)-FAD (His-Cys). N-linked (GlcNAc...) asparagine glycosylation is found at Asn-341 and Asn-359.

The protein belongs to the oxygen-dependent FAD-linked oxidoreductase family. Requires FAD as cofactor. The FAD cofactor is bound via a bicovalent 6-S-cysteinyl, 8alpha-N1-histidyl FAD linkage.

It localises to the secreted. Its subcellular location is the cell wall. The sequence is that of Berberine bridge enzyme-like 19 from Arabidopsis thaliana (Mouse-ear cress).